The primary structure comprises 85 residues: Small ribosomal subunit protein uS15c (85 aa).

The protein belongs to the universal ribosomal protein uS15 family. In terms of assembly, part of the 30S ribosomal subunit.

It localises to the plastid. It is found in the chloroplast. In Chaetosphaeridium globosum (Charophycean green alga), this protein is Small ribosomal subunit protein uS15c (rps15).